The sequence spans 514 residues: 2,3-bisphosphoglycerate-independent phosphoglycerate mutase (514 aa).

Positions 14 and 64 each coordinate Mn(2+). Ser-64 (phosphoserine intermediate) is an active-site residue. Substrate is bound by residues His-125, 155-156 (RD), Arg-187, Arg-193, 263-266 (RADR), and Lys-336. Mn(2+) is bound by residues Asp-403, His-407, Asp-444, His-445, and His-463.

This sequence belongs to the BPG-independent phosphoglycerate mutase family. In terms of assembly, monomer. The cofactor is Mn(2+).

The catalysed reaction is (2R)-2-phosphoglycerate = (2R)-3-phosphoglycerate. It functions in the pathway carbohydrate degradation; glycolysis; pyruvate from D-glyceraldehyde 3-phosphate: step 3/5. In terms of biological role, catalyzes the interconversion of 2-phosphoglycerate and 3-phosphoglycerate. The chain is 2,3-bisphosphoglycerate-independent phosphoglycerate mutase from Shewanella pealeana (strain ATCC 700345 / ANG-SQ1).